Reading from the N-terminus, the 930-residue chain is Polypeptide N-acetylgalactosaminyltransferase 5 (930 aa).

At 1–12 (MNKIRKFFRGSG) the chain is on the cytoplasmic side. Residues 13–35 (RVLAFIFVASVIWLLFDMAALRL) form a helical; Signal-anchor for type II membrane protein membrane-spanning segment. The Lumenal portion of the chain corresponds to 36-930 (SFSEINTGIL…KWKFEKYYDV (895 aa)). Residues 163 to 210 (GSEKDSFTVSRGVPLNKTAEHTETLDKKQEAPENYNLSSDTSKQASQR) are disordered. N-linked (GlcNAc...) asparagine glycosylation occurs at asparagine 178. Residues 180 to 193 (TAEHTETLDKKQEA) show a composition bias toward basic and acidic residues. Positions 197 to 210 (YNLSSDTSKQASQR) are enriched in polar residues. N-linked (GlcNAc...) asparagine glycosylation is found at asparagine 198 and asparagine 213. Serine 285 carries the post-translational modification Phosphoserine. Asparagine 287 and asparagine 309 each carry an N-linked (GlcNAc...) asparagine glycan. Positions 344–377 (LGESQGKHIPRSQSQTLSSPLAPKRAVSQSKPTL) are disordered. Asparagine 387 and asparagine 403 each carry an N-linked (GlcNAc...) asparagine glycan. 3 disulfide bridges follow: cysteine 476/cysteine 708, cysteine 699/cysteine 779, and cysteine 812/cysteine 825. The interval 485–594 (LPTTSIIMCF…VGWLEPLLER (110 aa)) is catalytic subdomain A. Positions 526 and 555 each coordinate substrate. The N-linked (GlcNAc...) asparagine glycan is linked to asparagine 568. Mn(2+) is bound at residue aspartate 578. Serine 579 lines the substrate pocket. Histidine 580 serves as a coordination point for Mn(2+). The segment at 654-716 (IIRCPVMAGG…PCSRVGHIFR (63 aa)) is catalytic subdomain B. A substrate-binding site is contributed by tryptophan 685. Mn(2+) is bound at residue histidine 713. Arginine 716 and tyrosine 721 together coordinate substrate. Asparagine 766, asparagine 817, and asparagine 835 each carry an N-linked (GlcNAc...) asparagine glycan. Residues 794-925 (KAPVVRASGV…TEPQQKWKFE (132 aa)) form the Ricin B-type lectin domain. 2 disulfide bridges follow: cysteine 848/cysteine 863 and cysteine 898/cysteine 913. N-linked (GlcNAc...) asparagine glycosylation is present at asparagine 902.

The protein belongs to the glycosyltransferase 2 family. GalNAc-T subfamily. As to quaternary structure, interacts with EXT2. Does not interact with EXT1, EXTL1 or EXTL3. The cofactor is Mn(2+). In terms of tissue distribution, predominantly expressed in sublingual gland. Expressed at lower level in stomach and small intestine. Weakly or not expressed in submandibular gland, parotid gland, kidney, liver, heart, brain, spleen, lung, skeletal muscle, testis, ovary, cervix and uterus.

It is found in the golgi apparatus membrane. It catalyses the reaction L-seryl-[protein] + UDP-N-acetyl-alpha-D-galactosamine = a 3-O-[N-acetyl-alpha-D-galactosaminyl]-L-seryl-[protein] + UDP + H(+). It carries out the reaction L-threonyl-[protein] + UDP-N-acetyl-alpha-D-galactosamine = a 3-O-[N-acetyl-alpha-D-galactosaminyl]-L-threonyl-[protein] + UDP + H(+). The protein operates within protein modification; protein glycosylation. Its function is as follows. Catalyzes the initial reaction in O-linked oligosaccharide biosynthesis, the transfer of an N-acetyl-D-galactosamine residue to a serine or threonine residue on the protein receptor. Has activity toward EA2 peptide substrate, but has a weak activity toward Muc2, Muc1b, rMuc-2 or mG-Muc substrates. This Rattus norvegicus (Rat) protein is Polypeptide N-acetylgalactosaminyltransferase 5 (Galnt5).